The sequence spans 110 residues: MSGVWVFKNGVIRLVENPNQSGGDTNSRRKVMVYLPTGEVISSYSTLEQILRSLGWERYFGGGDTDLLQFHKRSSIDLISLPKDFTKFSSVYMYDIVVKNPNYFHVRDSN.

It belongs to the FPF1 family.

Its function is as follows. Modulates the competence to flowering of apical meristems. The sequence is that of Flowering-promoting factor 1 (FPF1) from Sinapis alba (White mustard).